The following is a 556-amino-acid chain: Glucose-6-phosphate isomerase (556 aa).

The Proton donor role is filled by glutamate 364. Active-site residues include histidine 395 and lysine 521.

Belongs to the GPI family.

Its subcellular location is the cytoplasm. The catalysed reaction is alpha-D-glucose 6-phosphate = beta-D-fructose 6-phosphate. It functions in the pathway carbohydrate biosynthesis; gluconeogenesis. Its pathway is carbohydrate degradation; glycolysis; D-glyceraldehyde 3-phosphate and glycerone phosphate from D-glucose: step 2/4. Its function is as follows. Catalyzes the reversible isomerization of glucose-6-phosphate to fructose-6-phosphate. The chain is Glucose-6-phosphate isomerase from Corynebacterium kroppenstedtii (strain DSM 44385 / JCM 11950 / CIP 105744 / CCUG 35717).